Reading from the N-terminus, the 364-residue chain is 3-isopropylmalate dehydrogenase (364 aa).

Residue Gly76 to Glu89 coordinates NAD(+). Substrate is bound by residues Arg97, Arg107, Arg136, and Asp225. Mg(2+)-binding residues include Asp225, Asp249, and Asp253. Gly283 to Asn295 contacts NAD(+).

It belongs to the isocitrate and isopropylmalate dehydrogenases family. LeuB type 1 subfamily. In terms of assembly, homodimer. The cofactor is Mg(2+). Mn(2+) is required as a cofactor.

Its subcellular location is the cytoplasm. The enzyme catalyses (2R,3S)-3-isopropylmalate + NAD(+) = 4-methyl-2-oxopentanoate + CO2 + NADH. It functions in the pathway amino-acid biosynthesis; L-leucine biosynthesis; L-leucine from 3-methyl-2-oxobutanoate: step 3/4. In terms of biological role, catalyzes the oxidation of 3-carboxy-2-hydroxy-4-methylpentanoate (3-isopropylmalate) to 3-carboxy-4-methyl-2-oxopentanoate. The product decarboxylates to 4-methyl-2 oxopentanoate. This Shewanella oneidensis (strain ATCC 700550 / JCM 31522 / CIP 106686 / LMG 19005 / NCIMB 14063 / MR-1) protein is 3-isopropylmalate dehydrogenase.